The chain runs to 125 residues: Small ribosomal subunit protein eS6 (125 aa).

This sequence belongs to the eukaryotic ribosomal protein eS6 family.

This chain is Small ribosomal subunit protein eS6, found in Pyrococcus abyssi (strain GE5 / Orsay).